Consider the following 130-residue polypeptide: DNA-directed RNA polymerase subunit omega (130 aa).

Disordered regions lie at residues 79–98 and 108–130; these read EPESDTVPLIGSAGASVDAD and TEEELLKGLEGLAPPEEQPEEDE.

Belongs to the RNA polymerase subunit omega family. The RNAP catalytic core consists of 2 alpha, 1 beta, 1 beta' and 1 omega subunit. When a sigma factor is associated with the core the holoenzyme is formed, which can initiate transcription.

It catalyses the reaction RNA(n) + a ribonucleoside 5'-triphosphate = RNA(n+1) + diphosphate. Functionally, promotes RNA polymerase assembly. Latches the N- and C-terminal regions of the beta' subunit thereby facilitating its interaction with the beta and alpha subunits. This is DNA-directed RNA polymerase subunit omega from Nitrobacter winogradskyi (strain ATCC 25391 / DSM 10237 / CIP 104748 / NCIMB 11846 / Nb-255).